The sequence spans 269 residues: Intermembrane phospholipid transport system ATP-binding protein MlaF (269 aa).

In terms of domain architecture, ABC transporter spans 9-245 (VDMRDVSFTR…PDPRVRQFLD (237 aa)). An ATP-binding site is contributed by 41–48 (GPSGIGKT).

Belongs to the ABC transporter superfamily. MlaF family. The complex is composed of two ATP-binding proteins (MlaF), two transmembrane proteins (MlaE), two cytoplasmic solute-binding proteins (MlaB) and six periplasmic solute-binding proteins (MlaD).

It is found in the cell inner membrane. In terms of biological role, part of the ABC transporter complex MlaFEDB, which is involved in a phospholipid transport pathway that maintains lipid asymmetry in the outer membrane by retrograde trafficking of phospholipids from the outer membrane to the inner membrane. Responsible for energy coupling to the transport system. In Escherichia coli O157:H7, this protein is Intermembrane phospholipid transport system ATP-binding protein MlaF.